The following is a 481-amino-acid chain: 3-isopropylmalate dehydratase large subunit (481 aa).

C357, C417, and C420 together coordinate [4Fe-4S] cluster.

This sequence belongs to the aconitase/IPM isomerase family. LeuC type 1 subfamily. As to quaternary structure, heterodimer of LeuC and LeuD. [4Fe-4S] cluster is required as a cofactor.

It carries out the reaction (2R,3S)-3-isopropylmalate = (2S)-2-isopropylmalate. It participates in amino-acid biosynthesis; L-leucine biosynthesis; L-leucine from 3-methyl-2-oxobutanoate: step 2/4. Its function is as follows. Catalyzes the isomerization between 2-isopropylmalate and 3-isopropylmalate, via the formation of 2-isopropylmaleate. The sequence is that of 3-isopropylmalate dehydratase large subunit from Mycolicibacterium gilvum (strain PYR-GCK) (Mycobacterium gilvum (strain PYR-GCK)).